A 544-amino-acid polypeptide reads, in one-letter code: Methionine--tRNA ligase (544 aa).

The 'HIGH' region motif lies at 10–20; it reads PYANGSLHLGH. Residues Cys-141, Cys-144, Cys-153, and Cys-156 each contribute to the Zn(2+) site. The 'KMSKS' region signature appears at 329–333; sequence KLSTS. Thr-332 contributes to the ATP binding site.

The protein belongs to the class-I aminoacyl-tRNA synthetase family. MetG type 1 subfamily. As to quaternary structure, monomer. Zn(2+) is required as a cofactor.

The protein resides in the cytoplasm. The enzyme catalyses tRNA(Met) + L-methionine + ATP = L-methionyl-tRNA(Met) + AMP + diphosphate. Its function is as follows. Is required not only for elongation of protein synthesis but also for the initiation of all mRNA translation through initiator tRNA(fMet) aminoacylation. The sequence is that of Methionine--tRNA ligase from Bacillus mycoides (strain KBAB4) (Bacillus weihenstephanensis).